The primary structure comprises 383 residues: Large ribosomal subunit protein uL2m (383 aa).

2 disordered regions span residues 97-122 (FPKKGQSKGGRNHSGRVTVRHRGGGH) and 322-357 (MNANDHPHGGGRGKSKGNRHPVSPWGTPAKGGYKTR). 2 stretches are compositionally biased toward basic residues: residues 106–122 (GRNHSGRVTVRHRGGGH) and 330–340 (GGGRGKSKGNR).

It belongs to the universal ribosomal protein uL2 family. As to quaternary structure, component of the mitochondrial large ribosomal subunit (mt-LSU). Mature N.crassa 74S mitochondrial ribosomes consist of a small (37S) and a large (54S) subunit. The 37S small subunit contains a 16S ribosomal RNA (16S mt-rRNA) and 32 different proteins. The 54S large subunit contains a 23S rRNA (23S mt-rRNA) and 42 different proteins.

The protein localises to the mitochondrion. In terms of biological role, component of the mitochondrial ribosome (mitoribosome), a dedicated translation machinery responsible for the synthesis of mitochondrial genome-encoded proteins, including at least some of the essential transmembrane subunits of the mitochondrial respiratory chain. The mitoribosomes are attached to the mitochondrial inner membrane and translation products are cotranslationally integrated into the membrane. The sequence is that of Large ribosomal subunit protein uL2m (rml2) from Neurospora crassa (strain ATCC 24698 / 74-OR23-1A / CBS 708.71 / DSM 1257 / FGSC 987).